We begin with the raw amino-acid sequence, 317 residues long: Transaldolase (317 aa).

Lys-126 acts as the Schiff-base intermediate with substrate in catalysis.

This sequence belongs to the transaldolase family. Type 1 subfamily. In terms of assembly, homodimer.

The protein localises to the cytoplasm. The catalysed reaction is D-sedoheptulose 7-phosphate + D-glyceraldehyde 3-phosphate = D-erythrose 4-phosphate + beta-D-fructose 6-phosphate. Its pathway is carbohydrate degradation; pentose phosphate pathway; D-glyceraldehyde 3-phosphate and beta-D-fructose 6-phosphate from D-ribose 5-phosphate and D-xylulose 5-phosphate (non-oxidative stage): step 2/3. Its function is as follows. Transaldolase is important for the balance of metabolites in the pentose-phosphate pathway. This chain is Transaldolase, found in Paraburkholderia xenovorans (strain LB400).